Consider the following 811-residue polypeptide: TLR4 interactor with leucine rich repeats (811 aa).

A signal peptide spans 1-25; it reads MEGVGAVRFWLVVCGCLAFPPRAES. An LRRNT domain is found at 26-57; sequence VCPERCDCQHPQHLLCTNRGLRAVPKTSSLPS. Residues 26–696 are Extracellular-facing; the sequence is VCPERCDCQH…AGGRGGVDYQ (671 aa). LRR repeat units follow at residues 61–81, 84–105, 108–129, 132–153, 156–177, 180–201, 204–223, 230–251, 254–275, 278–298, 302–323, and 326–347; these read VLTY…DFHR, QLRR…TFEK, RLEE…TLAP, KLRI…SFEG, SLVK…VFAP, NLLY…AFTQ, KLRF…RHAA, SLST…VFQH, RLGL…AFWG, ALRE…TLLE, SLEA…TFGH, and RLRE…IFAA. Asparagine 73 is a glycosylation site (N-linked (GlcNAc...) asparagine). The LRRCT domain occupies 359-416; that stretch reads NGWTCDCRLRGLKRWMGNWHSQGRLLTVFVQCRHPPALRGKYLDYLDDQLLQNGSCVD. The N-linked (GlcNAc...) asparagine glycan is linked to asparagine 411. Disordered stretches follow at residues 414-460 and 486-562; these read CVDP…QQRG and RRGP…QQGR. Over residues 421 to 430 the composition is skewed to polar residues; sequence PTAGSRQWPI. Composition is skewed to low complexity over residues 440-460 and 494-508; these read PPAG…QQRG and QSPS…APQS. A compositionally biased stretch (basic and acidic residues) spans 510 to 519; sequence DLHEKPERGR. The segment covering 524–545 has biased composition (polar residues); it reads NLPQTEPTPTSEPASGTPSARD. An N-linked (GlcNAc...) asparagine glycan is attached at asparagine 589. The helical transmembrane segment at 697-717 threads the bilayer; the sequence is LLTLVLLAINALLVLLALAAW. The Cytoplasmic segment spans residues 718–809; sequence GSRWLRRKLR…RREDHLLQRF (92 aa). Serine 798 is modified (phosphoserine).

In terms of assembly, belongs to the lipopolysaccharide (LPS) receptor, a multi-protein complex containing at least CD14, MD-2 and TLR4. Interacts with TLR4; this interaction is greatly enhanced following LPS stimulation. Interacts with LPS. In terms of processing, N-glycolysaled. As to expression, highly expressed in cortical astrocytes and in cerebellar granule neurons.

It is found in the membrane. Component of the TLR4 signaling complex. Mediates the innate immune response to bacterial lipopolysaccharide (LPS) leading to cytokine secretion and the inflammatory response. This chain is TLR4 interactor with leucine rich repeats (Tril), found in Rattus norvegicus (Rat).